The primary structure comprises 752 residues: Cation-transporting P-type ATPase B (752 aa).

The HMA domain maps to 15 to 78 (RRIRLDVLGM…VVEKAGYHAA (64 aa)). The a metal cation site is built by C26 and C29. Helical transmembrane passes span 105-125 (LLVA…FAIV), 132-152 (GWGY…AWPF), 167-187 (METL…SSVF), 201-221 (AILN…VFVL), 361-381 (IAGV…AAWL), and 390-410 (AFSV…GLAT). The active-site 4-aspartylphosphate intermediate is D446. The next 2 helical transmembrane spans lie at 491 to 511 (MAAA…FVAV) and 714 to 734 (AIPI…AMAF).

It belongs to the cation transport ATPase (P-type) (TC 3.A.3) family. Type IB subfamily.

It localises to the cell membrane. It carries out the reaction ATP + H2O = ADP + phosphate + H(+). This chain is Cation-transporting P-type ATPase B (ctpB), found in Mycobacterium tuberculosis (strain ATCC 25618 / H37Rv).